An 898-amino-acid polypeptide reads, in one-letter code: Serine/threonine-protein kinase TAO3 (898 aa).

The Protein kinase domain maps to 24–277; the sequence is FIGLHEIGHG…SAELLRHDFV (254 aa). Residues 30 to 38 and Lys53 contribute to the ATP site; that span reads IGHGSFGAV. Asp147 (proton acceptor) is an active-site residue. 2 disordered regions span residues 316 to 362 and 405 to 425; these read TRNG…SQSS and DEAG…VQSQ. At Ser324 the chain carries Phosphoserine; by ATM. A phosphoserine mark is found at Ser331, Ser343, Ser346, and Ser349. The span at 334 to 351 shows a compositional bias: polar residues; that stretch reads GTSLNREMDSLGSNHSIP. Over residues 352-362 the composition is skewed to low complexity; sequence SMSVSTGSQSS. Phosphothreonine is present on Thr357. Ser359 is modified (phosphoserine). Basic and acidic residues predominate over residues 405–416; the sequence is DEAGHGDPRPEP. Ser442 carries the post-translational modification Phosphoserine. 3 coiled-coil regions span residues 452 to 502, 548 to 649, and 754 to 879; these read EQEN…THAN, FLES…HAML, and LKTL…DMES. Residues 565–596 form a disordered region; sequence EEMNEDHSTPKKEKQERISKHKENLQHTQAEE. N6-acetyllysine is present on Lys830.

This sequence belongs to the protein kinase superfamily. STE Ser/Thr protein kinase family. STE20 subfamily. In terms of assembly, self-associates. Interacts with ERN1 and TRAF2. Interaction with TRAF2 is facilitated under ER stress conditions, such as treatment with tunicamycin, and may promote TRAF2 phosphorylation. Interacts (via N-terminus) with STK25; the interaction promotes STK25 abundance at the level of protein expression and/or stability. Autophosphorylated. Phosphorylation at Ser-324 by ATM following DNA damage is required for activation of the p38/MAPK14 stress-activated MAPK cascade. Phosphorylated at Ser-324 and on Tyr residues during T cell activation. Phosphorylated by LRRK2.

It localises to the cytoplasm. The protein resides in the cell membrane. It is found in the membrane raft. The protein localises to the lipid droplet. It carries out the reaction L-seryl-[protein] + ATP = O-phospho-L-seryl-[protein] + ADP + H(+). It catalyses the reaction L-threonyl-[protein] + ATP = O-phospho-L-threonyl-[protein] + ADP + H(+). Its function is as follows. Serine/threonine-protein kinase that acts as a regulator of the p38/MAPK14 stress-activated MAPK cascade and of the MAPK8/JNK cascade. In response to DNA damage, involved in the G2/M transition DNA damage checkpoint by activating the p38/MAPK14 stress-activated MAPK cascade, probably by mediating phosphorylation of upstream MAP2K3 and MAP2K6 kinases. Inhibits basal activity of the MAPK8/JNK cascade and diminishes its activation in response to epidermal growth factor (EGF). Positively regulates canonical T cell receptor (TCR) signaling by preventing early PTPN6/SHP1-mediated inactivation of LCK, ensuring sustained TCR signaling that is required for optimal activation and differentiation of T cells. Phosphorylates PTPN6/SHP1 on 'Thr-394', leading to its polyubiquitination and subsequent proteasomal degradation. Required for cell surface expression of metalloprotease ADAM10 on type 1 transitional B cells which is necessary for their NOTCH-mediated development into marginal zone B cells. Also required for the NOTCH-mediated terminal differentiation of splenic conventional type 2 dendritic cells. Positively regulates osteoblast differentiation by acting as an upstream activator of the JNK pathway. Promotes JNK signaling in hepatocytes and positively regulates hepatocyte lipid storage by inhibiting beta-oxidation and triacylglycerol secretion while enhancing lipid synthesis. Restricts age-associated inflammation by negatively regulating differentiation of macrophages and their production of pro-inflammatory cytokines. Plays a role in negatively regulating the abundance of regulatory T cells in white adipose tissue. The chain is Serine/threonine-protein kinase TAO3 (TAOK3) from Pongo abelii (Sumatran orangutan).